The following is a 1281-amino-acid chain: Zinc finger transcription factor Trps1 (1281 aa).

Residues 1-198 (MVRKKNPPLR…VPSDGGVRLN (198 aa)) are disordered. K29 participates in a covalent cross-link: Glycyl lysine isopeptide (Lys-Gly) (interchain with G-Cter in SUMO2). Over residues 40 to 49 (DQMSENTDQS) the composition is skewed to polar residues. The span at 53–63 (ELNHKEEHSLH) shows a compositional bias: basic and acidic residues. Residue K76 forms a Glycyl lysine isopeptide (Lys-Gly) (interchain with G-Cter in SUMO2) linkage. Phosphoserine occurs at positions 90 and 127. Residues 148–162 (LETKEDQKMSPKATE) show a composition bias toward basic and acidic residues. Positions 163-189 (ETGQAQSGQANCQGLSPVSVASKNPQV) are enriched in polar residues. Residues S178 and S216 each carry the phosphoserine modification. A C2H2-type 1; atypical zinc finger spans residues 222–247 (FKCNICGYGYYGNDPTDLIKHFRKYH). Residue K263 forms a Glycyl lysine isopeptide (Lys-Gly) (interchain with G-Cter in SUMO2) linkage. The C2H2-type 2; atypical zinc finger occupies 333-358 (FRCKFCNFTYMGNSSTELEQHFLQTH). Residues 365–394 (SLPSSEVAKPSEKNSNKSIPALQSSDSGDL) are disordered. The segment covering 380–391 (NKSIPALQSSDS) has biased composition (polar residues). Residues K418, K457, K474, and K488 each participate in a glycyl lysine isopeptide (Lys-Gly) (interchain with G-Cter in SUMO2) cross-link. Residues 483-512 (QNDLAKSSEGETMTKTDKSSSGAKKKDFSS) form a disordered region. Over residues 488–512 (KSSEGETMTKTDKSSSGAKKKDFSS) the composition is skewed to basic and acidic residues. The C2H2-type 3; atypical zinc-finger motif lies at 614-637 (HQCHQCSFTTPDVDVLLFHYESVH). A mediates interaction with GLI3 region spans residues 635 to 819 (SVHESQASDV…SLGLLTPVSG (185 aa)). A Glycyl lysine isopeptide (Lys-Gly) (interchain with G-Cter in SUMO2) cross-link involves residue K645. 2 consecutive C2H2-type zinc fingers follow at residues 666–689 (HSCT…RRAH) and 692–715 (YKCR…NTVH). A Glycyl lysine isopeptide (Lys-Gly) (interchain with G-Cter in SUMO2) cross-link involves residue K737. Position 751 is a phosphothreonine (T751). A Glycyl lysine isopeptide (Lys-Gly) (interchain with G-Cter in SUMO2) cross-link involves residue K755. A Glycyl lysine isopeptide (Lys-Gly) (interchain with G-Cter in SUMO1); alternate cross-link involves residue K766. A Glycyl lysine isopeptide (Lys-Gly) (interchain with G-Cter in SUMO2); alternate cross-link involves residue K766. Residues K825, K850, K877, and K879 each participate in a glycyl lysine isopeptide (Lys-Gly) (interchain with G-Cter in SUMO2) cross-link. A disordered region spans residues 856 to 887 (APAGGEKSGALPQQYPASGENKSKDESQSLLR). The GATA-type zinc finger occupies 896 to 920 (CANCLTTKTSLWRKNANGGYVCNAC). Residues K925, K937, and K965 each participate in a glycyl lysine isopeptide (Lys-Gly) (interchain with G-Cter in SUMO2) cross-link. Over residues 961–977 (EQLNKQQRGSNEEQVNG) the composition is skewed to polar residues. Residues 961–1000 (EQLNKQQRGSNEEQVNGSPLERRSEDHLTESHQREIPLPS) are disordered. Position 978 is a phosphoserine (S978). Residues 980–995 (LERRSEDHLTESHQRE) show a composition bias toward basic and acidic residues. The tract at residues 985–1184 (EDHLTESHQR…PTANGASKEK (200 aa)) is mediates interaction with RNF4. Residues K1003, K1012, K1030, and K1040 each participate in a glycyl lysine isopeptide (Lys-Gly) (interchain with G-Cter in SUMO2) cross-link. The interval 1039–1080 (IKSPQESTGDPGNSSSVSEGKGSSERGSPIEKYMRPAKHPNY) is disordered. Polar residues predominate over residues 1040–1049 (KSPQESTGDP). Phosphoserine is present on S1041. Residues 1050–1059 (GNSSSVSEGK) are compositionally biased toward low complexity. The span at 1060–1072 (GSSERGSPIEKYM) shows a compositional bias: basic and acidic residues. Phosphoserine is present on S1066. Residue K1070 forms a Glycyl lysine isopeptide (Lys-Gly) (interchain with G-Cter in SUMO2) linkage. A Phosphoserine modification is found at S1085. Residues 1163-1281 (PLDLAIKHSR…QVEKNGKPKE (119 aa)) form a transcriptional repressor domain region. Positions 1168-1196 (IKHSRPGPTANGASKEKTKAPPNVKNEGP) are disordered. Glycyl lysine isopeptide (Lys-Gly) (interchain with G-Cter in SUMO2); alternate cross-links involve residues K1192 and K1201. Residues K1192 and K1201 each participate in a glycyl lysine isopeptide (Lys-Gly) (interchain with G-Cter in SUMO); alternate cross-link. K1201 participates in a covalent cross-link: Glycyl lysine isopeptide (Lys-Gly) (interchain with G-Cter in SUMO1); alternate. 2 C2H2-type zinc fingers span residues 1215–1237 (TKCV…MSCH) and 1243–1267 (FQCS…RGLH).

As to quaternary structure, interacts with RNF4; regulates TRPS1 repressor activity. Interacts specifically with the activator form of GLI3 (GLI3A) but not with the repressor form (GLI3R). Sumoylated. Sumoylation in the repressor domain inhibits the transcription repression activity. Sumoylation on Lys-1201 is the major site. Appears to be sumoylated on multiple sites. Ubiquitously expressed in the adult. Found in fetal brain, lung, kidney, liver, spleen and thymus. More highly expressed in androgen-dependent than in androgen-independent prostate cancer cells.

The protein localises to the nucleus. In terms of biological role, transcriptional repressor. Binds specifically to GATA sequences and represses expression of GATA-regulated genes at selected sites and stages in vertebrate development. Regulates chondrocyte proliferation and differentiation. Executes multiple functions in proliferating chondrocytes, expanding the region of distal chondrocytes, activating proliferation in columnar cells and supporting the differentiation of columnar into hypertrophic chondrocytes. The sequence is that of Zinc finger transcription factor Trps1 (TRPS1) from Homo sapiens (Human).